We begin with the raw amino-acid sequence, 1074 residues long: Transmembrane protein 132E (1074 aa).

Positions 1–25 are cleaved as a signal peptide; the sequence is MAPGMSGRGGAALLCLSALLAHASG. Topologically, residues 26 to 893 are extracellular; sequence RSHPASPSPP…LTDLEIGMYA (868 aa). N-linked (GlcNAc...) asparagine glycans are attached at residues asparagine 70 and asparagine 91. 2 disordered regions span residues 202-226 and 241-264; these read PPAPAAPPTARRKSPDGLEPEATGE and ASGGCGGSRRGAGPGVGARAESPT. Residues 243 to 256 are compositionally biased toward gly residues; the sequence is GGCGGSRRGAGPGV. N-linked (GlcNAc...) asparagine glycans are attached at residues asparagine 318 and asparagine 399. 2 disordered regions span residues 563–585 and 814–867; these read RSVRESEDEDEEEEERRQSASRG and GRDE…VPPT. Residues 841–862 show a composition bias toward low complexity; that stretch reads GAGPPGSALPAPEAPGPGTASP. Residues 894-914 form a helical membrane-spanning segment; it reads LLGVFCLAILVFLINCIVFVL. The Cytoplasmic portion of the chain corresponds to 915–1074; the sequence is RYRHKRIPPE…NYMRRIKEIA (160 aa). Positions 946–1063 are disordered; sequence VQGELSPPAG…PTRPTAPPDL (118 aa). Low complexity predominate over residues 972–984; the sequence is SGSSQTSVQSQVH. The span at 1034-1044 shows a compositional bias: acidic residues; sequence GEEDEEEEEDL.

The protein belongs to the TMEM132 family.

The protein localises to the membrane. In terms of biological role, required for normal inner ear hair cell function and hearing. The sequence is that of Transmembrane protein 132E from Homo sapiens (Human).